We begin with the raw amino-acid sequence, 92 residues long: Small ribosomal subunit protein uS19c (92 aa).

This sequence belongs to the universal ribosomal protein uS19 family.

It localises to the plastid. The protein localises to the chloroplast. In terms of biological role, protein S19 forms a complex with S13 that binds strongly to the 16S ribosomal RNA. The polypeptide is Small ribosomal subunit protein uS19c (rps19) (Pinus thunbergii (Japanese black pine)).